Reading from the N-terminus, the 273-residue chain is Aquaporin NIP1-4 (273 aa).

Helical transmembrane passes span Leu59–Val79 and Val86–Val106. The NPA 1 signature appears at Asn115–Ala117. A run of 3 helical transmembrane segments spans residues Ala133–Phe155, Ser174–Thr194, and Ala198–Ala218. Positions Asn227 to Ala229 match the NPA 2 motif. A helical transmembrane segment spans residues Trp245–Ile265.

This sequence belongs to the MIP/aquaporin (TC 1.A.8) family. NIP (TC 1.A.8.12) subfamily. In terms of tissue distribution, expressed in leaves.

The protein localises to the membrane. Functionally, aquaporins facilitate the transport of water and small neutral solutes across cell membranes. This is Aquaporin NIP1-4 (NIP1-4) from Oryza sativa subsp. japonica (Rice).